We begin with the raw amino-acid sequence, 327 residues long: Phospho-N-acetylmuramoyl-pentapeptide-transferase (327 aa).

A run of 10 helical transmembrane segments spans residues 3–23 (TAIIAGITTFILTIIGIPAFI), 51–71 (TMGGTVFLLASIVASFVIALF), 79–99 (VTTILFILFLYGLVGFLDDFL), 115–135 (LFLQLVGGVVFYLFFERHGGG), 140–160 (VFGFPLELGFLYIFFVLFWLV), 172–192 (IDGLASISVVISLGAYAVIAL), 197–217 (FDLLIVIFSMIGGLLGFFGFN), 223–243 (IFMGDVGSLALGGMLAALSIA), 248–268 (WTLLLIGIVYVFETASVMLQV), and 306–326 (VDFLFWGIGLVASLITLAILY).

This sequence belongs to the glycosyltransferase 4 family. MraY subfamily. Mg(2+) is required as a cofactor.

The protein resides in the cell membrane. The catalysed reaction is UDP-N-acetyl-alpha-D-muramoyl-L-alanyl-gamma-D-glutamyl-L-lysyl-D-alanyl-D-alanine + di-trans,octa-cis-undecaprenyl phosphate = Mur2Ac(oyl-L-Ala-gamma-D-Glu-L-Lys-D-Ala-D-Ala)-di-trans,octa-cis-undecaprenyl diphosphate + UMP. The protein operates within cell wall biogenesis; peptidoglycan biosynthesis. Its function is as follows. Catalyzes the initial step of the lipid cycle reactions in the biosynthesis of the cell wall peptidoglycan: transfers peptidoglycan precursor phospho-MurNAc-pentapeptide from UDP-MurNAc-pentapeptide onto the lipid carrier undecaprenyl phosphate, yielding undecaprenyl-pyrophosphoryl-MurNAc-pentapeptide, known as lipid I. The protein is Phospho-N-acetylmuramoyl-pentapeptide-transferase of Streptococcus gordonii (strain Challis / ATCC 35105 / BCRC 15272 / CH1 / DL1 / V288).